Reading from the N-terminus, the 85-residue chain is UPF0291 protein SP_1473 (85 aa).

The segment at 62–85 is disordered; that stretch reads TPEKLRQVQREKGLHGRSLDDPNS.

The protein belongs to the UPF0291 family.

Its subcellular location is the cytoplasm. The sequence is that of UPF0291 protein SP_1473 from Streptococcus pneumoniae serotype 4 (strain ATCC BAA-334 / TIGR4).